Reading from the N-terminus, the 151-residue chain is Small ribosomal subunit protein bS6 (151 aa).

The interval 94–151 (EEHEQGPSAMMRKRDDDDRGERGERPRGPRPERGERGERGERGPRRPREDNIGEEGLY) is disordered. Positions 105-144 (RKRDDDDRGERGERPRGPRPERGERGERGERGPRRPREDN) are enriched in basic and acidic residues.

The protein belongs to the bacterial ribosomal protein bS6 family.

Binds together with bS18 to 16S ribosomal RNA. This is Small ribosomal subunit protein bS6 from Beijerinckia indica subsp. indica (strain ATCC 9039 / DSM 1715 / NCIMB 8712).